The primary structure comprises 180 residues: ATP-dependent protease subunit HslV (180 aa).

T5 is an active-site residue. Na(+) is bound by residues G161, C164, and T167.

Belongs to the peptidase T1B family. HslV subfamily. In terms of assembly, a double ring-shaped homohexamer of HslV is capped on each side by a ring-shaped HslU homohexamer. The assembly of the HslU/HslV complex is dependent on binding of ATP.

It localises to the cytoplasm. It carries out the reaction ATP-dependent cleavage of peptide bonds with broad specificity.. With respect to regulation, allosterically activated by HslU binding. Its function is as follows. Protease subunit of a proteasome-like degradation complex believed to be a general protein degrading machinery. In Campylobacter fetus subsp. fetus (strain 82-40), this protein is ATP-dependent protease subunit HslV.